Consider the following 158-residue polypeptide: MARRNKAKKRTSPDSRYGSVLLMRFINIIMKCGKKSIAEKIAYSALSLAEKKIGKDALSIFETAVENVTPSIEVRSRRIGGATYQVPVEIRQDRAISLALRWIARATSAARKKSGRTTVYCLQSEILDAYNKCGGAFKMCEEKYKMAEANKAFSHLRF.

It belongs to the universal ribosomal protein uS7 family. Part of the 30S ribosomal subunit. Contacts proteins S9 and S11.

In terms of biological role, one of the primary rRNA binding proteins, it binds directly to 16S rRNA where it nucleates assembly of the head domain of the 30S subunit. Is located at the subunit interface close to the decoding center, probably blocks exit of the E-site tRNA. This chain is Small ribosomal subunit protein uS7, found in Wolbachia pipientis subsp. Culex pipiens (strain wPip).